Consider the following 222-residue polypeptide: Adenylate kinase (222 aa).

Position 2 (Ser-2) is a propeptide, removed in mature form. An N-acetylserine mark is found at Ser-2 and Ser-3. 16-21 (GAGKGT) serves as a coordination point for ATP. Residues 36 to 65 (ATGDMLRSQIAKGTQLGLEAKKIMDQGGLV) are NMP. Residues Thr-37, Arg-42, 63-65 (GLV), 92-95 (GFPR), and Gln-99 each bind AMP. Positions 133–170 (GRLIHPASGRSYHKIFNPPKEDMKDDVTGEALVQRSDD) are LID. Residues Arg-134 and 143 to 144 (SY) each bind ATP. AMP-binding residues include Arg-167 and Arg-178. Gln-206 contributes to the ATP binding site.

The protein belongs to the adenylate kinase family. AK2 subfamily. Monomer.

The protein resides in the cytoplasm. The protein localises to the cytosol. Its subcellular location is the mitochondrion intermembrane space. It carries out the reaction AMP + ATP = 2 ADP. Functionally, catalyzes the reversible transfer of the terminal phosphate group between ATP and AMP. Plays an important role in cellular energy homeostasis and in adenine nucleotide metabolism. Adenylate kinase activity is critical for regulation of the phosphate utilization and the AMP de novo biosynthesis pathways. This chain is Adenylate kinase, found in Saccharomyces cerevisiae (strain RM11-1a) (Baker's yeast).